A 295-amino-acid polypeptide reads, in one-letter code: Secreted frizzled-related protein 2 (295 aa).

Residues 1–24 (MLQGPGSLLLLFLASHCCLGSARG) form the signal peptide. The FZ domain maps to 35-155 (YKRSNCKPIP…PQDNDLCIPL (121 aa)). Intrachain disulfides connect C40–C103, C50–C96, C87–C125, C114–C152, C118–C142, C172–C245, C175–C247, and C190–C295. Residues 172–295 (CEACKNKNDD…ISRSIRKLQC (124 aa)) form the NTR domain.

The protein belongs to the secreted frizzled-related protein (sFRP) family. As to expression, expressed in adipose tissue, heart, brain, skeletal muscle, pancreas, thymus, prostate, testis, ovary, small intestine and colon. Highest levels in adipose tissue, small intestine and colon.

The protein resides in the secreted. In terms of biological role, soluble frizzled-related proteins (sFRPS) function as modulators of Wnt signaling through direct interaction with Wnts. They have a role in regulating cell growth and differentiation in specific cell types. SFRP2 may be important for eye retinal development and for myogenesis. The protein is Secreted frizzled-related protein 2 (SFRP2) of Homo sapiens (Human).